Reading from the N-terminus, the 332-residue chain is Ribosomal RNA small subunit methyltransferase H (332 aa).

S-adenosyl-L-methionine is bound by residues 36 to 38, D54, F81, D102, and Q109; that span reads GGY. The segment at 284–332 is disordered; it reads VTAGQEEVSANPRARSAKLRAAERTAAPATADDGESPGWPSLANVMRGG.

This sequence belongs to the methyltransferase superfamily. RsmH family.

The protein resides in the cytoplasm. The enzyme catalyses cytidine(1402) in 16S rRNA + S-adenosyl-L-methionine = N(4)-methylcytidine(1402) in 16S rRNA + S-adenosyl-L-homocysteine + H(+). In terms of biological role, specifically methylates the N4 position of cytidine in position 1402 (C1402) of 16S rRNA. This is Ribosomal RNA small subunit methyltransferase H from Nitrobacter hamburgensis (strain DSM 10229 / NCIMB 13809 / X14).